Consider the following 496-residue polypeptide: Solute carrier family 2, facilitated glucose transporter member 3 (496 aa).

Residues 1 to 11 lie on the Cytoplasmic side of the membrane; that stretch reads MADKKKITASL. A helical membrane pass occupies residues 12–33; it reads IYAVSVAAIGSLQFGYNTGVIN. The Extracellular portion of the chain corresponds to 34–65; sequence APEKIIQAFYNRTLSQRSGETISPELLTSLWS. Residue asparagine 44 is glycosylated (N-linked (GlcNAc...) asparagine). The helical transmembrane segment at 66–86 threads the bilayer; the sequence is LSVAIFSVGGMIGSFSVSLFF. At 87–91 the chain is on the cytoplasmic side; sequence NRFGR. A helical membrane pass occupies residues 92-112; that stretch reads RNSMLLVNVLAFAGGALMALS. At 113 to 119 the chain is on the extracellular side; the sequence is KIAKAVE. A helical transmembrane segment spans residues 120–143; the sequence is MLIIGRFIIGLFCGLCTGFVPMYI. Residues 144–154 lie on the Cytoplasmic side of the membrane; the sequence is SEVSPTSLRGA. Residues 155–175 form a helical membrane-spanning segment; sequence FGTLNQLGIVVGILVAQIFGL. Glutamine 160 contacts D-glucose. The Extracellular segment spans residues 176–184; that stretch reads EGIMGTEAL. The helical transmembrane segment at 185–205 threads the bilayer; sequence WPLLLGFTIVPAVLQCVALLF. The Cytoplasmic segment spans residues 206-270; sequence CPESPRFLLI…LFRSPNYRQP (65 aa). A helical membrane pass occupies residues 271–291; it reads IIISITLQLSQQLSGINAVFY. The important for selectivity against fructose stretch occupies residues 278–280; the sequence is QLS. D-glucose-binding positions include 281 to 282 and asparagine 287; that span reads QQ. Topologically, residues 292–305 are extracellular; it reads YSTGIFERAGITQP. Residues 306 to 326 form a helical membrane-spanning segment; sequence VYATIGAGVVNTVFTVVSLFL. Asparagine 316 contributes to the D-glucose binding site. Topologically, residues 327 to 332 are cytoplasmic; it reads VERAGR. A helical transmembrane segment spans residues 333-353; sequence RTLHLVGLGGMAVCAAVMTIA. Residues 354 to 362 lie on the Extracellular side of the membrane; that stretch reads LALKEKWIR. Residues 363–388 form a helical membrane-spanning segment; sequence YISIVATFGFVALFEIGPGPIPWFIV. Residues glutamate 377 and tryptophan 385 each coordinate D-glucose. The Cytoplasmic portion of the chain corresponds to 389 to 398; sequence AELFSQGPRP. A helical transmembrane segment spans residues 399 to 419; that stretch reads AAMAVAGCSNWTSNFLVGMLF. The Extracellular portion of the chain corresponds to 420–428; it reads PYAEKLCGP. Residues 429 to 449 form a helical membrane-spanning segment; the sequence is YVFLIFLVFLLIFFIFTYFKV. At 450 to 496 the chain is on the cytoplasmic side; that stretch reads PETKGRTFEDISRGFEEQVETSSPSSPPIEKNPMVEMNSIEPDKEVA. The tract at residues 464–496 is disordered; it reads FEEQVETSSPSSPPIEKNPMVEMNSIEPDKEVA.

This sequence belongs to the major facilitator superfamily. Sugar transporter (TC 2.A.1.1) family. Glucose transporter subfamily.

The protein localises to the cell membrane. Its subcellular location is the perikaryon. It localises to the cell projection. The enzyme catalyses D-glucose(out) = D-glucose(in). It catalyses the reaction D-galactose(in) = D-galactose(out). Deoxyglucose transport is inhibited by D-glucose, D-galactose and maltose. Galactose transport is inhibited by D-glucose and maltose. Facilitative glucose transporter. Can also mediate the uptake of various other monosaccharides across the cell membrane. Mediates the uptake of glucose, 2-deoxyglucose, galactose, mannose, xylose and fucose, and probably also dehydroascorbate. Does not mediate fructose transport. Required for mesendoderm differentiation. This is Solute carrier family 2, facilitated glucose transporter member 3 from Gallus gallus (Chicken).